The primary structure comprises 475 residues: MAFASEDNVYHSSNAVYRAPSNHQEADQEALLGKLLDYPAPGLQRPEDRFNGAYIIFFCLGIGGLLPWNFFVTAKEYWAYKLRNCSSPASGEDPEDMDILNYFESYLAVASTVPSLLFLVANFLLVNRVQVHVRVLASLSVSLAIFVVMIVLVKVDTSSWTRGFFSLTIACMAIISSSSTIFNSSVYGLTGSFPMRNAQALISGGAMGGTVSAVALLVDLAASSDVRDSTLAFFLMAAVFLGLCMGLYLLLSQLEYARYYMRPVAPVRVFSGEDNPSQDAPSASSVAPASRVMHTPPLGPILKKTASLGFCAVSLYFVTAFIIPAISTNIQSMHKGTGSPWTSKFFVPLTVFLLFNFADLCGRQVTAWIQVPGPRSKLLPGLVVSRFCLVPLFLLCNYQPRSHLTKVLFQSDIYPVLFTCLLGLSNGYLSTLVLIYGPKIVPRELAEATSVVMLFYMSVGLMLGSACAALLEHFI.

Over 1 to 51 the chain is Cytoplasmic; the sequence is MAFASEDNVYHSSNAVYRAPSNHQEADQEALLGKLLDYPAPGLQRPEDRFN. Ser-21 bears the Phosphoserine mark. A Dileucine internalization motif motif is present at residues 31-32; it reads LL. The chain crosses the membrane as a helical span at residues 52 to 72; it reads GAYIIFFCLGIGGLLPWNFFV. The Extracellular portion of the chain corresponds to 73 to 105; it reads TAKEYWAYKLRNCSSPASGEDPEDMDILNYFES. The N-linked (GlcNAc...) asparagine glycan is linked to Asn-84. The chain crosses the membrane as a helical span at residues 106 to 126; sequence YLAVASTVPSLLFLVANFLLV. Residues 127 to 134 are Cytoplasmic-facing; it reads NRVQVHVR. The chain crosses the membrane as a helical span at residues 135–155; the sequence is VLASLSVSLAIFVVMIVLVKV. The Extracellular portion of the chain corresponds to 156 to 162; it reads DTSSWTR. Residues 163–183 form a helical membrane-spanning segment; the sequence is GFFSLTIACMAIISSSSTIFN. The Cytoplasmic portion of the chain corresponds to 184 to 199; it reads SSVYGLTGSFPMRNAQ. A helical membrane pass occupies residues 200–220; the sequence is ALISGGAMGGTVSAVALLVDL. Residues 221-230 are Extracellular-facing; that stretch reads AASSDVRDST. A helical membrane pass occupies residues 231 to 251; sequence LAFFLMAAVFLGLCMGLYLLL. Residues 252–305 are Cytoplasmic-facing; it reads SQLEYARYYMRPVAPVRVFSGEDNPSQDAPSASSVAPASRVMHTPPLGPILKKT. Residues 306–326 form a helical membrane-spanning segment; the sequence is ASLGFCAVSLYFVTAFIIPAI. At 327 to 340 the chain is on the extracellular side; it reads STNIQSMHKGTGSP. Residues 341 to 361 traverse the membrane as a helical segment; it reads WTSKFFVPLTVFLLFNFADLC. Topologically, residues 362-377 are cytoplasmic; that stretch reads GRQVTAWIQVPGPRSK. A helical transmembrane segment spans residues 378–398; sequence LLPGLVVSRFCLVPLFLLCNY. Residues 399–415 lie on the Extracellular side of the membrane; sequence QPRSHLTKVLFQSDIYP. Residues 416–436 form a helical membrane-spanning segment; sequence VLFTCLLGLSNGYLSTLVLIY. The Cytoplasmic portion of the chain corresponds to 437–450; that stretch reads GPKIVPRELAEATS. The helical transmembrane segment at 451–471 threads the bilayer; it reads VVMLFYMSVGLMLGSACAALL. The Extracellular segment spans residues 472–475; that stretch reads EHFI.

This sequence belongs to the SLC29A/ENT transporter (TC 2.A.57) family. Expressed in macrophages.

The protein localises to the lysosome membrane. Its subcellular location is the late endosome membrane. The protein resides in the mitochondrion membrane. It localises to the cell membrane. It carries out the reaction adenosine(in) = adenosine(out). The catalysed reaction is guanosine(in) = guanosine(out). It catalyses the reaction inosine(in) = inosine(out). The enzyme catalyses uridine(out) = uridine(in). It carries out the reaction cytidine(in) = cytidine(out). The catalysed reaction is thymidine(in) = thymidine(out). It catalyses the reaction 2'-deoxyadenosine(in) = 2'-deoxyadenosine(out). The enzyme catalyses 2'-deoxycytidine(in) = 2'-deoxycytidine(out). It carries out the reaction guanine(out) = guanine(in). The catalysed reaction is uracil(in) = uracil(out). It catalyses the reaction (R)-noradrenaline(out) = (R)-noradrenaline(in). The enzyme catalyses dopamine(out) = dopamine(in). It carries out the reaction serotonin(out) = serotonin(in). The catalysed reaction is tyramine(in) = tyramine(out). It catalyses the reaction ATP(in) = ATP(out). Functionally, uniporter that mediates the facilitative transport of nucleoside across lysosomal and mitochondrial membranes. Functions as a non-electrogenic Na(+)-independent transporter. Substrate transport is pH-dependent and enhanced under acidic condition, probably reflecting the location of the transporter in acidic intracellular compartments. Proton is not a cotransporting ion but most likely change the ionization state of the transporter which dictates transport-permissible/impermissible conformation for nucleoside translocation. May direct the nucleoside transport from lysosomes to cytosol or cytosol to mitochondria to facilitate the fundamental function of salvage synthesis of nucleic acids. Involved in the transport of nucleosides (adenosine, guanosine, uridine, thymidine, cytidine and inosine) and deoxynucleosides (deoxyadenosine, deoxycytidine). Also mediates transport of purine nucleobases (adenine, guanine), and pyrimidine nucleobases (uracil). Also able to transport monoamine neurotransmitters dopamine, serotonin, noradrenaline and tyramine. Capable of transporting ATP. Mediates nucleoside export from lysosomes in macrophages, which regulates macrophage functions and numbers. In Mus musculus (Mouse), this protein is Equilibrative nucleoside transporter 3.